The sequence spans 143 residues: Lysozyme C (143 aa).

The N-terminal stretch at 1–15 (MRCLLLLLLVPVPGA) is a signal peptide. Residues 16–143 (KVFERCEWAR…LSSYVAGCGV (128 aa)) enclose the C-type lysozyme domain. Cystine bridges form between Cys-21/Cys-141, Cys-45/Cys-129, Cys-79/Cys-94, and Cys-90/Cys-108. Residues Glu-50 and Asp-67 contribute to the active site.

This sequence belongs to the glycosyl hydrolase 22 family. Monomer.

Its subcellular location is the secreted. It carries out the reaction Hydrolysis of (1-&gt;4)-beta-linkages between N-acetylmuramic acid and N-acetyl-D-glucosamine residues in a peptidoglycan and between N-acetyl-D-glucosamine residues in chitodextrins.. Lysozymes have primarily a bacteriolytic function; those in tissues and body fluids are associated with the monocyte-macrophage system and enhance the activity of immunoagents. This chain is Lysozyme C (lys), found in Scophthalmus maximus (Turbot).